The sequence spans 120 residues: Large ribosomal subunit protein uL18 (120 aa).

It belongs to the universal ribosomal protein uL18 family. As to quaternary structure, part of the 50S ribosomal subunit; part of the 5S rRNA/L5/L18/L25 subcomplex. Contacts the 5S and 23S rRNAs.

In terms of biological role, this is one of the proteins that bind and probably mediate the attachment of the 5S RNA into the large ribosomal subunit, where it forms part of the central protuberance. The protein is Large ribosomal subunit protein uL18 of Chloroherpeton thalassium (strain ATCC 35110 / GB-78).